Consider the following 667-residue polypeptide: UvrABC system protein B (667 aa).

Residues 28–185 (NNFKQGLKEQ…NKLIELKYQR (158 aa)) enclose the Helicase ATP-binding domain. Residue 41-48 (GATGTGKT) coordinates ATP. Residues 94 to 117 (YYDYYQPEAYVASSDTYIEKDSKI) carry the Beta-hairpin motif. The Helicase C-terminal domain maps to 432-594 (QMDDLYFEIK…VTPTALNKTI (163 aa)). The UVR domain maps to 629–664 (NKEIKRLQKTMKEAAKALDFEKAATLRDLILDLEKK).

The protein belongs to the UvrB family. As to quaternary structure, forms a heterotetramer with UvrA during the search for lesions. Interacts with UvrC in an incision complex.

Its subcellular location is the cytoplasm. Functionally, the UvrABC repair system catalyzes the recognition and processing of DNA lesions. A damage recognition complex composed of 2 UvrA and 2 UvrB subunits scans DNA for abnormalities. Upon binding of the UvrA(2)B(2) complex to a putative damaged site, the DNA wraps around one UvrB monomer. DNA wrap is dependent on ATP binding by UvrB and probably causes local melting of the DNA helix, facilitating insertion of UvrB beta-hairpin between the DNA strands. Then UvrB probes one DNA strand for the presence of a lesion. If a lesion is found the UvrA subunits dissociate and the UvrB-DNA preincision complex is formed. This complex is subsequently bound by UvrC and the second UvrB is released. If no lesion is found, the DNA wraps around the other UvrB subunit that will check the other stand for damage. The polypeptide is UvrABC system protein B (Aster yellows witches'-broom phytoplasma (strain AYWB)).